Consider the following 544-residue polypeptide: Protein adenylyltransferase (544 aa).

In terms of domain architecture, Fido spans 63–216 (FDTAYLCHIH…LEPMQHLFED (154 aa)). Residues 93–94 (FA), 106–107 (RT), 163–167 (EGNGR), and arginine 170 contribute to the ATP site.

The protein localises to the secreted. The catalysed reaction is L-tyrosyl-[protein] + ATP = O-(5'-adenylyl)-L-tyrosyl-[protein] + diphosphate. The enzyme catalyses L-threonyl-[protein] + ATP = 3-O-(5'-adenylyl)-L-threonyl-[protein] + diphosphate. Adenylyltransferase involved in virulence by mediating the addition of adenosine 5'-monophosphate (AMP) to specific residue of host target proteins. The chain is Protein adenylyltransferase (bepA) from Bartonella henselae (strain ATCC 49882 / DSM 28221 / CCUG 30454 / Houston 1) (Rochalimaea henselae).